The primary structure comprises 215 residues: 3-demethoxyubiquinol 3-hydroxylase (215 aa).

Positions 64, 94, 97, 146, 178, and 181 each coordinate Fe cation.

This sequence belongs to the COQ7 family. Fe cation is required as a cofactor.

Its subcellular location is the cell membrane. It catalyses the reaction a 5-methoxy-2-methyl-3-(all-trans-polyprenyl)benzene-1,4-diol + AH2 + O2 = a 3-demethylubiquinol + A + H2O. It functions in the pathway cofactor biosynthesis; ubiquinone biosynthesis. Its function is as follows. Catalyzes the hydroxylation of 2-nonaprenyl-3-methyl-6-methoxy-1,4-benzoquinol during ubiquinone biosynthesis. This Ectopseudomonas mendocina (strain ymp) (Pseudomonas mendocina) protein is 3-demethoxyubiquinol 3-hydroxylase.